Consider the following 432-residue polypeptide: 3-phosphoshikimate 1-carboxyvinyltransferase (432 aa).

3-phosphoshikimate-binding residues include K23, S24, and R28. K23 contributes to the phosphoenolpyruvate binding site. 2 residues coordinate phosphoenolpyruvate: G95 and R123. The 3-phosphoshikimate site is built by S167, Q169, D317, and K344. Q169 lines the phosphoenolpyruvate pocket. D317 acts as the Proton acceptor in catalysis. Residues R348 and R390 each coordinate phosphoenolpyruvate.

Belongs to the EPSP synthase family. Monomer.

It localises to the cytoplasm. The catalysed reaction is 3-phosphoshikimate + phosphoenolpyruvate = 5-O-(1-carboxyvinyl)-3-phosphoshikimate + phosphate. Its pathway is metabolic intermediate biosynthesis; chorismate biosynthesis; chorismate from D-erythrose 4-phosphate and phosphoenolpyruvate: step 6/7. Catalyzes the transfer of the enolpyruvyl moiety of phosphoenolpyruvate (PEP) to the 5-hydroxyl of shikimate-3-phosphate (S3P) to produce enolpyruvyl shikimate-3-phosphate and inorganic phosphate. The chain is 3-phosphoshikimate 1-carboxyvinyltransferase from Staphylococcus aureus (strain COL).